Here is a 642-residue protein sequence, read N- to C-terminus: Threonine--tRNA ligase (642 aa).

The TGS domain occupies Met1–Asp61. The segment at Asp243–Pro534 is catalytic. 3 residues coordinate Zn(2+): Cys334, His385, and His511.

The protein belongs to the class-II aminoacyl-tRNA synthetase family. As to quaternary structure, homodimer. It depends on Zn(2+) as a cofactor.

The protein localises to the cytoplasm. The catalysed reaction is tRNA(Thr) + L-threonine + ATP = L-threonyl-tRNA(Thr) + AMP + diphosphate + H(+). Functionally, catalyzes the attachment of threonine to tRNA(Thr) in a two-step reaction: L-threonine is first activated by ATP to form Thr-AMP and then transferred to the acceptor end of tRNA(Thr). Also edits incorrectly charged L-seryl-tRNA(Thr). This is Threonine--tRNA ligase from Buchnera aphidicola subsp. Acyrthosiphon pisum (strain 5A).